Reading from the N-terminus, the 427-residue chain is Probable glucuronosyltransferase Os03g0107900 (427 aa).

Over 1–33 (MAMRGDPKQRRASASAPHGGAAHHVADKLRRHS) the chain is Cytoplasmic. Residues 34–54 (TFLLLLLLLWFALSLYLFLSA) traverse the membrane as a helical; Signal-anchor for type II membrane protein segment. Residues 55-427 (TPPPPRPAFL…QRRHVESWKR (373 aa)) are Lumenal-facing. N-linked (GlcNAc...) asparagine glycosylation is found at Asn-136, Asn-168, Asn-264, and Asn-374.

Belongs to the glycosyltransferase 47 family.

The protein resides in the golgi apparatus membrane. Involved in the synthesis of glucuronoxylan hemicellulose in secondary cell walls. This Oryza sativa subsp. japonica (Rice) protein is Probable glucuronosyltransferase Os03g0107900.